Reading from the N-terminus, the 426-residue chain is Histidine--tRNA ligase (426 aa).

Belongs to the class-II aminoacyl-tRNA synthetase family. Homodimer.

The protein localises to the cytoplasm. The enzyme catalyses tRNA(His) + L-histidine + ATP = L-histidyl-tRNA(His) + AMP + diphosphate + H(+). The chain is Histidine--tRNA ligase from Streptococcus equi subsp. zooepidemicus (strain MGCS10565).